A 166-amino-acid polypeptide reads, in one-letter code: Protein UL5 (166 aa).

The protein belongs to the RL11 family. Interacts with host IQGAP1.

The protein localises to the host cytoplasm. Its function is as follows. May play a role in rearrangement of cellular cytoskeleton towards an efficient viral assembly and spreading. The sequence is that of Protein UL5 (UL5) from Human cytomegalovirus (strain AD169) (HHV-5).